We begin with the raw amino-acid sequence, 227 residues long: Cytochrome c oxidase subunit 2 (227 aa).

The Mitochondrial intermembrane portion of the chain corresponds to 1 to 14; that stretch reads MANHSQLGFQDASS. A helical transmembrane segment spans residues 15–45; it reads PIMEELVEFHDHALMVALAICSLVLYLLTLM. Residues 46–58 lie on the Mitochondrial matrix side of the membrane; that stretch reads LTQKLSSNTVDAQ. Residues 59 to 86 form a helical membrane-spanning segment; the sequence is EVELIWTILPAIVLVLLALPSLQILYMM. Topologically, residues 87–227 are mitochondrial intermembrane; the sequence is DEIEEPDLTL…FETWSSLLSS (141 aa). Cu cation contacts are provided by His160, Cys195, Glu197, Cys199, His203, and Met206. Mg(2+) is bound at residue Glu197.

This sequence belongs to the cytochrome c oxidase subunit 2 family. As to quaternary structure, component of the cytochrome c oxidase (complex IV, CIV), a multisubunit enzyme composed of 14 subunits. The complex is composed of a catalytic core of 3 subunits MT-CO1, MT-CO2 and MT-CO3, encoded in the mitochondrial DNA, and 11 supernumerary subunits COX4I, COX5A, COX5B, COX6A, COX6B, COX6C, COX7A, COX7B, COX7C, COX8 and NDUFA4, which are encoded in the nuclear genome. The complex exists as a monomer or a dimer and forms supercomplexes (SCs) in the inner mitochondrial membrane with NADH-ubiquinone oxidoreductase (complex I, CI) and ubiquinol-cytochrome c oxidoreductase (cytochrome b-c1 complex, complex III, CIII), resulting in different assemblies (supercomplex SCI(1)III(2)IV(1) and megacomplex MCI(2)III(2)IV(2)). Found in a complex with TMEM177, COA6, COX18, COX20, SCO1 and SCO2. Interacts with TMEM177 in a COX20-dependent manner. Interacts with COX20. Interacts with COX16. It depends on Cu cation as a cofactor.

It localises to the mitochondrion inner membrane. It catalyses the reaction 4 Fe(II)-[cytochrome c] + O2 + 8 H(+)(in) = 4 Fe(III)-[cytochrome c] + 2 H2O + 4 H(+)(out). Component of the cytochrome c oxidase, the last enzyme in the mitochondrial electron transport chain which drives oxidative phosphorylation. The respiratory chain contains 3 multisubunit complexes succinate dehydrogenase (complex II, CII), ubiquinol-cytochrome c oxidoreductase (cytochrome b-c1 complex, complex III, CIII) and cytochrome c oxidase (complex IV, CIV), that cooperate to transfer electrons derived from NADH and succinate to molecular oxygen, creating an electrochemical gradient over the inner membrane that drives transmembrane transport and the ATP synthase. Cytochrome c oxidase is the component of the respiratory chain that catalyzes the reduction of oxygen to water. Electrons originating from reduced cytochrome c in the intermembrane space (IMS) are transferred via the dinuclear copper A center (CU(A)) of subunit 2 and heme A of subunit 1 to the active site in subunit 1, a binuclear center (BNC) formed by heme A3 and copper B (CU(B)). The BNC reduces molecular oxygen to 2 water molecules using 4 electrons from cytochrome c in the IMS and 4 protons from the mitochondrial matrix. The polypeptide is Cytochrome c oxidase subunit 2 (MT-CO2) (Coturnix japonica (Japanese quail)).